We begin with the raw amino-acid sequence, 273 residues long: Large ribosomal subunit protein uL2 (273 aa).

The interval 228 to 273 (VDHPHGGGEGKTSGGRHPVTPWGFPTKGKKTRKNKRTSKFIVKKRK) is disordered. Residues 254–273 (KGKKTRKNKRTSKFIVKKRK) are compositionally biased toward basic residues.

It belongs to the universal ribosomal protein uL2 family. In terms of assembly, part of the 50S ribosomal subunit. Forms a bridge to the 30S subunit in the 70S ribosome.

Its function is as follows. One of the primary rRNA binding proteins. Required for association of the 30S and 50S subunits to form the 70S ribosome, for tRNA binding and peptide bond formation. It has been suggested to have peptidyltransferase activity; this is somewhat controversial. Makes several contacts with the 16S rRNA in the 70S ribosome. The protein is Large ribosomal subunit protein uL2 of Rickettsia akari (strain Hartford).